We begin with the raw amino-acid sequence, 299 residues long: Oxygen-dependent coproporphyrinogen-III oxidase (299 aa).

S92 contacts substrate. H96 and H106 together coordinate a divalent metal cation. The active-site Proton donor is H106. 108-110 contacts substrate; it reads NVR. H145 and H175 together coordinate a divalent metal cation. Residues 240 to 275 form an important for dimerization region; that stretch reads YVEFNLVWDRGTLFGLQTGGRTESILMSMPPLVRWE. 258–260 contributes to the substrate binding site; that stretch reads GGR.

Belongs to the aerobic coproporphyrinogen-III oxidase family. In terms of assembly, homodimer. It depends on a divalent metal cation as a cofactor.

The protein localises to the cytoplasm. The enzyme catalyses coproporphyrinogen III + O2 + 2 H(+) = protoporphyrinogen IX + 2 CO2 + 2 H2O. The protein operates within porphyrin-containing compound metabolism; protoporphyrin-IX biosynthesis; protoporphyrinogen-IX from coproporphyrinogen-III (O2 route): step 1/1. Involved in the heme biosynthesis. Catalyzes the aerobic oxidative decarboxylation of propionate groups of rings A and B of coproporphyrinogen-III to yield the vinyl groups in protoporphyrinogen-IX. This is Oxygen-dependent coproporphyrinogen-III oxidase from Shigella boydii serotype 18 (strain CDC 3083-94 / BS512).